The primary structure comprises 199 residues: Thymidine kinase (199 aa).

ATP contacts are provided by residues 23–30 and 95–98; these read GSMFSGKT and DEAQ. Glu-96 (proton acceptor) is an active-site residue. Cys-152, Cys-155, Cys-184, and Cys-187 together coordinate Zn(2+).

It belongs to the thymidine kinase family. In terms of assembly, homotetramer.

The protein resides in the cytoplasm. It carries out the reaction thymidine + ATP = dTMP + ADP + H(+). The sequence is that of Thymidine kinase from Bacteroides thetaiotaomicron (strain ATCC 29148 / DSM 2079 / JCM 5827 / CCUG 10774 / NCTC 10582 / VPI-5482 / E50).